Consider the following 142-residue polypeptide: Protein Turandot X (142 aa).

The N-terminal stretch at 1–22 is a signal peptide; sequence MGLSIGSLLICVFLGIVPFATA.

This sequence belongs to the Turandot family.

The protein resides in the secreted. Functionally, a humoral factor that may play a role in stress tolerance. The chain is Protein Turandot X from Drosophila melanogaster (Fruit fly).